Here is a 381-residue protein sequence, read N- to C-terminus: MSLSGLRKQFNKANQYLSETMGAAEPTKLDDVFNEMEKNVDTTYNLITDLVAGTNEYLQPNPATRAKMATQVALSKVRGTTKTSPYPQTEGMLADVMQKYGQQLGDNSDLGKSLNDAAETYRQMADIKYQMEDNVKQNFLDPLTHLQNNELKDVNHHRTKLKGRRLDYDCKKRQQRRDDEMIQAEEKLEESKRLAEMSMFNVLSNDVEQISQLRALIEAQLDFHRQTAQCLENLQQQLGHRIKDAAARPREEHVPLSVLANESRTPRSSFRSPAPSDMSHNSTAAAAFKMPPQNGGGITQAPPSYQGPPPGGLPPPLSQQQKPQCRALFDFDAQSEGELDFKEGTLIELVSQIDENWYEGRVNGKTGLFPVTYVQVLVPLK.

The tract at residues 1-21 is membrane-binding amphipathic helix; that stretch reads MSLSGLRKQFNKANQYLSETM. Residues 18 to 247 enclose the BAR domain; sequence SETMGAAEPT…LGHRIKDAAA (230 aa). The stretch at 170–238 forms a coiled coil; that stretch reads CKKRQQRRDD…QCLENLQQQL (69 aa). The interval 246-323 is disordered; that stretch reads AARPREEHVP…PPPLSQQQKP (78 aa). Residues 260-271 are compositionally biased toward polar residues; sequence ANESRTPRSSFR. Pro residues predominate over residues 305-317; the sequence is YQGPPPGGLPPPL. The 60-residue stretch at 320–379 folds into the SH3 domain; that stretch reads QQKPQCRALFDFDAQSEGELDFKEGTLIELVSQIDENWYEGRVNGKTGLFPVTYVQVLVP.

It belongs to the endophilin family. May form a homodimer (via the BAR domain). As to expression, expressed in neurons and posterior intestine.

The protein localises to the synapse. Its subcellular location is the cytoplasmic vesicle. It is found in the secretory vesicle. The protein resides in the synaptic vesicle. It localises to the membrane. Involved in synaptic vesicle (SV) recycling in neurons probably by regulating clathrin-mediated endocytosis. By controlling SV endocytosis, regulates the rate of excitatory postsynaptic currents (EPSCs) at neuromuscular junctions and thus locomotion. In a similar manner, involved in necrotic neuronal cell death induced by abnormal hyperactivation of ion channels. Plays a minor role in responses to mechanical stimuli. Plays a minor role in unc-26/synaptojanin localization to synapses. This is Endophilin-A homolog from Caenorhabditis elegans.